We begin with the raw amino-acid sequence, 160 residues long: Phosphopantetheine adenylyltransferase (160 aa).

Position 10 (T10) interacts with substrate. Residues 10 to 11 and H18 each bind ATP; that span reads TF. Residues K42, L74, and R88 each contribute to the substrate site. Residues 89 to 91, E99, and 124 to 130 contribute to the ATP site; these read GLR and NSFISST.

It belongs to the bacterial CoaD family. In terms of assembly, homohexamer. Mg(2+) serves as cofactor.

It localises to the cytoplasm. The enzyme catalyses (R)-4'-phosphopantetheine + ATP + H(+) = 3'-dephospho-CoA + diphosphate. The protein operates within cofactor biosynthesis; coenzyme A biosynthesis; CoA from (R)-pantothenate: step 4/5. Its function is as follows. Reversibly transfers an adenylyl group from ATP to 4'-phosphopantetheine, yielding dephospho-CoA (dPCoA) and pyrophosphate. The polypeptide is Phosphopantetheine adenylyltransferase (Shewanella piezotolerans (strain WP3 / JCM 13877)).